The sequence spans 157 residues: Cell number regulator 10 (157 aa).

Transmembrane regions (helical) follow at residues 41-57 (DCGLCCLTCWCPCITFG) and 66-83 (GATSCGTAGALYAVLAYF).

Belongs to the cornifelin family. Expressed in roots, leaves, stalks, immature ears and silks.

It is found in the membrane. The protein is Cell number regulator 10 (CNR10) of Zea mays (Maize).